We begin with the raw amino-acid sequence, 218 residues long: MVPRDLGSRIRRRGLMLVLSSPSGAGKSTIARNLLESDSSLELSVSVTTRPRRGSEIEGVHYHFRTMREFERLRDSDALLEWAEVHGNCYATPREPAELALAQGRDMLFDIDWQGAQQLKEKMRADIVSIFILPPSMKELKARLKRRAEDQEAVIETRLKNARNEIEHWKEYDFVIVNDDLDRAFAEVRGIVVAERLRRDRRPGLFDFVSGLLDEKTV.

Residues 14–193 (GLMLVLSSPS…AFAEVRGIVV (180 aa)) enclose the Guanylate kinase-like domain. 21–28 (SPSGAGKS) is a binding site for ATP.

Belongs to the guanylate kinase family.

The protein resides in the cytoplasm. The enzyme catalyses GMP + ATP = GDP + ADP. Essential for recycling GMP and indirectly, cGMP. The sequence is that of Guanylate kinase (gmk) from Mesorhizobium japonicum (strain LMG 29417 / CECT 9101 / MAFF 303099) (Mesorhizobium loti (strain MAFF 303099)).